Reading from the N-terminus, the 152-residue chain is Transcriptional regulator MraZ (152 aa).

2 SpoVT-AbrB domains span residues 5 to 52 (LNPI…THPQ) and 81 to 124 (ATEV…GKSQ).

The protein belongs to the MraZ family. In terms of assembly, forms oligomers.

It localises to the cytoplasm. The protein resides in the nucleoid. The protein is Transcriptional regulator MraZ of Coxiella burnetii (strain Dugway 5J108-111).